A 409-amino-acid chain; its full sequence is S-adenosylmethionine synthase (409 aa).

His-15 contacts ATP. Asp-17 contacts Mg(2+). Glu-43 lines the K(+) pocket. Glu-56 and Gln-100 together coordinate L-methionine. Positions 100-110 (QSSDIAQGVNE) are flexible loop. Residues 171-173 (DGK), 248-249 (KF), Asp-257, 263-264 (RK), Ala-280, and Lys-284 contribute to the ATP site. Asp-257 provides a ligand contact to L-methionine. Lys-288 contributes to the L-methionine binding site.

It belongs to the AdoMet synthase family. As to quaternary structure, homotetramer; dimer of dimers. Mg(2+) serves as cofactor. The cofactor is K(+).

The protein resides in the cytoplasm. The catalysed reaction is L-methionine + ATP + H2O = S-adenosyl-L-methionine + phosphate + diphosphate. The protein operates within amino-acid biosynthesis; S-adenosyl-L-methionine biosynthesis; S-adenosyl-L-methionine from L-methionine: step 1/1. In terms of biological role, catalyzes the formation of S-adenosylmethionine (AdoMet) from methionine and ATP. The overall synthetic reaction is composed of two sequential steps, AdoMet formation and the subsequent tripolyphosphate hydrolysis which occurs prior to release of AdoMet from the enzyme. This is S-adenosylmethionine synthase from Prochlorococcus marinus (strain NATL2A).